The sequence spans 341 residues: Ribosomal RNA small subunit methyltransferase H (341 aa).

Residues 47–49 (GGY), Asp64, Phe91, Asp109, and Gln116 each bind S-adenosyl-L-methionine.

The protein belongs to the methyltransferase superfamily. RsmH family.

It is found in the cytoplasm. It carries out the reaction cytidine(1402) in 16S rRNA + S-adenosyl-L-methionine = N(4)-methylcytidine(1402) in 16S rRNA + S-adenosyl-L-homocysteine + H(+). Specifically methylates the N4 position of cytidine in position 1402 (C1402) of 16S rRNA. The polypeptide is Ribosomal RNA small subunit methyltransferase H (Rhizobium etli (strain ATCC 51251 / DSM 11541 / JCM 21823 / NBRC 15573 / CFN 42)).